The primary structure comprises 108 residues: Iron-sulfur cluster assembly protein CyaY (108 aa).

This sequence belongs to the frataxin family.

Its function is as follows. Involved in iron-sulfur (Fe-S) cluster assembly. May act as a regulator of Fe-S biogenesis. The protein is Iron-sulfur cluster assembly protein CyaY of Burkholderia mallei (strain NCTC 10247).